We begin with the raw amino-acid sequence, 187 residues long: Large ribosomal subunit protein uL5 (187 aa).

Belongs to the universal ribosomal protein uL5 family. Part of the 50S ribosomal subunit; part of the 5S rRNA/L5/L18/L25 subcomplex. Contacts the 5S rRNA and the P site tRNA. Forms a bridge to the 30S subunit in the 70S ribosome.

Functionally, this is one of the proteins that bind and probably mediate the attachment of the 5S RNA into the large ribosomal subunit, where it forms part of the central protuberance. In the 70S ribosome it contacts protein S13 of the 30S subunit (bridge B1b), connecting the 2 subunits; this bridge is implicated in subunit movement. Contacts the P site tRNA; the 5S rRNA and some of its associated proteins might help stabilize positioning of ribosome-bound tRNAs. This chain is Large ribosomal subunit protein uL5, found in Ruegeria sp. (strain TM1040) (Silicibacter sp.).